The sequence spans 290 residues: Probable aquaporin PIP2-1 (290 aa).

The next 2 helical transmembrane spans lie at 43–63 (AVIA…ATVI) and 80–100 (CGGV…FILV). The NPA 1 signature appears at 112 to 114 (NPA). 3 helical membrane passes run 131 to 151 (ILYI…VKAF), 173 to 193 (GTGL…VFSA), and 207 to 227 (VLAP…TIPI). The NPA 2 signature appears at 233-235 (NPA). A helical membrane pass occupies residues 255–275 (IFWVGPFVGAAIAAFYHQYIL).

It belongs to the MIP/aquaporin (TC 1.A.8) family. PIP (TC 1.A.8.11) subfamily. In terms of tissue distribution, expressed in roots, leaves and anthers.

The protein localises to the cell membrane. Functionally, aquaporins facilitate the transport of water and small neutral solutes across cell membranes. In Oryza sativa subsp. japonica (Rice), this protein is Probable aquaporin PIP2-1 (PIP2-1).